Reading from the N-terminus, the 490-residue chain is AP-5 complex subunit mu-1 (490 aa).

Residues 206–476 (KPQVSISITE…LISSDYYIWN (271 aa)) enclose the MHD domain.

Belongs to the adaptor complexes medium subunit family. Probably part of the adaptor protein complex 5 (AP-5) a tetramer composed of AP5B1, AP5M1, AP5S1 and AP5Z1.

The protein resides in the cytoplasm. The protein localises to the cytosol. Its subcellular location is the late endosome membrane. It is found in the lysosome membrane. Functionally, as part of AP-5, a probable fifth adaptor protein complex it may be involved in endosomal transport. The chain is AP-5 complex subunit mu-1 (AP5M1) from Macaca fascicularis (Crab-eating macaque).